Consider the following 440-residue polypeptide: uncharacterized protein (440 aa).

A run of 10 helical transmembrane segments spans residues asparagine 26 to phenylalanine 46, phenylalanine 59 to leucine 79, phenylalanine 96 to lysine 116, leucine 138 to leucine 158, phenylalanine 211 to alanine 231, leucine 241 to isoleucine 261, tryptophan 263 to phenylalanine 283, tryptophan 284 to isoleucine 304, phenylalanine 394 to isoleucine 414, and isoleucine 418 to isoleucine 438.

To M.pneumoniae MPN_087.

It localises to the cell membrane. This is an uncharacterized protein from Mycoplasma pneumoniae (strain ATCC 29342 / M129 / Subtype 1) (Mycoplasmoides pneumoniae).